Reading from the N-terminus, the 108-residue chain is Protein YcgL (108 aa).

The YcgL domain maps to 12-96 (MFCVIYRSSK…PPEDLLKQHL (85 aa)).

This chain is Protein YcgL, found in Escherichia coli O17:K52:H18 (strain UMN026 / ExPEC).